The following is a 500-amino-acid chain: 4-alpha-glucanotransferase (500 aa).

Belongs to the disproportionating enzyme family.

It localises to the cytoplasm. The catalysed reaction is Transfers a segment of a (1-&gt;4)-alpha-D-glucan to a new position in an acceptor, which may be glucose or a (1-&gt;4)-alpha-D-glucan.. The protein is 4-alpha-glucanotransferase (malQ) of Thermus thermophilus.